The sequence spans 515 residues: Maturase K (515 aa).

It belongs to the intron maturase 2 family. MatK subfamily.

Its subcellular location is the plastid. It is found in the chloroplast. Its function is as follows. Usually encoded in the trnK tRNA gene intron. Probably assists in splicing its own and other chloroplast group II introns. The chain is Maturase K from Pinus halepensis (Aleppo pine).